The chain runs to 196 residues: Large ribosomal subunit protein uL5 (196 aa).

This sequence belongs to the universal ribosomal protein uL5 family. In terms of assembly, part of the 50S ribosomal subunit; part of the 5S rRNA/L5/L18/L25 subcomplex. Contacts the 5S rRNA and the P site tRNA. Forms a bridge to the 30S subunit in the 70S ribosome.

In terms of biological role, this is one of the proteins that bind and probably mediate the attachment of the 5S RNA into the large ribosomal subunit, where it forms part of the central protuberance. In the 70S ribosome it contacts protein S13 of the 30S subunit (bridge B1b), connecting the 2 subunits; this bridge is implicated in subunit movement. Contacts the P site tRNA; the 5S rRNA and some of its associated proteins might help stabilize positioning of ribosome-bound tRNAs. This is Large ribosomal subunit protein uL5 from Rhodopirellula baltica (strain DSM 10527 / NCIMB 13988 / SH1).